The sequence spans 820 residues: 1,4-alpha-glucan-branching enzyme, chloroplastic/amyloplastic (820 aa).

Over residues 1 to 20 (MLCLTSSSSSAPAPLLPSLA) the composition is skewed to low complexity. Positions 1-28 (MLCLTSSSSSAPAPLLPSLADRPSPGIA) are disordered. The transit peptide at 1-64 (MLCLTSSSSS…SVPATARKNK (64 aa)) directs the protein to the chloroplast. (1,4-alpha-D-glucosyl)n-binding residues include W153 and K188. D409 serves as the catalytic Nucleophile. E464 functions as the Proton donor in the catalytic mechanism.

It belongs to the glycosyl hydrolase 13 family. GlgB subfamily. In terms of assembly, monomer.

The protein localises to the plastid. It is found in the chloroplast. It localises to the amyloplast. The enzyme catalyses Transfers a segment of a (1-&gt;4)-alpha-D-glucan chain to a primary hydroxy group in a similar glucan chain.. Its pathway is glycan biosynthesis; starch biosynthesis. Catalyzes the formation of the alpha-1,6-glucosidic linkages in starch by scission of a 1,4-alpha-linked oligosaccharide from growing alpha-1,4-glucan chains and the subsequent attachment of the oligosaccharide to the alpha-1,6 position. This chain is 1,4-alpha-glucan-branching enzyme, chloroplastic/amyloplastic (SBE1), found in Oryza sativa subsp. japonica (Rice).